A 146-amino-acid polypeptide reads, in one-letter code: Hemoglobin subunit beta (146 aa).

Positions 2 to 146 (HWTAEEKQLI…VAHALARKYH (145 aa)) constitute a Globin domain. Positions 63 and 92 each coordinate heme b.

This sequence belongs to the globin family. In terms of assembly, heterotetramer of two alpha chains and two beta chains. As to expression, red blood cells.

Involved in oxygen transport from the lung to the various peripheral tissues. The chain is Hemoglobin subunit beta (HBB) from Branta canadensis (Canada goose).